The chain runs to 22 residues: 2.4 kDa venom peptide (22 aa).

In terms of processing, contains 2 disulfide bonds. Expressed by the venom gland.

It localises to the secreted. Not lethal to mice by intraperitoneal or intracerebroventricular injections in doses up to 150 micrograms. The chain is 2.4 kDa venom peptide from Heterometrus spinifer (Asia giant forest scorpion).